The following is a 216-amino-acid chain: Large ribosomal subunit protein uL24m (216 aa).

A mitochondrion-targeting transit peptide spans 1 to 9 (MRLSALLAL). The residue at position 24 (Ser24) is a Phosphoserine. In terms of domain architecture, KOW spans 56 to 89 (LFCGDTVEILEGKDAGKQGKVVQVIRQRNWVVVG).

Belongs to the universal ribosomal protein uL24 family. In terms of assembly, component of the mitochondrial large ribosomal subunit (mt-LSU). Mature mammalian 55S mitochondrial ribosomes consist of a small (28S) and a large (39S) subunit. The 28S small subunit contains a 12S ribosomal RNA (12S mt-rRNA) and 30 different proteins. The 39S large subunit contains a 16S rRNA (16S mt-rRNA), a copy of mitochondrial valine transfer RNA (mt-tRNA(Val)), which plays an integral structural role, and 52 different proteins.

It is found in the mitochondrion. This is Large ribosomal subunit protein uL24m (MRPL24) from Homo sapiens (Human).